The following is a 215-amino-acid chain: Large ribosomal subunit protein uL1 (215 aa).

This sequence belongs to the universal ribosomal protein uL1 family. Part of the 50S ribosomal subunit.

Functionally, binds directly to 23S rRNA. Probably involved in E site tRNA release. Protein L1 is also a translational repressor protein, it controls the translation of its operon by binding to its mRNA. The polypeptide is Large ribosomal subunit protein uL1 (Archaeoglobus fulgidus (strain ATCC 49558 / DSM 4304 / JCM 9628 / NBRC 100126 / VC-16)).